Here is a 135-residue protein sequence, read N- to C-terminus: Large ribosomal subunit protein uL18 (135 aa).

Positions 1–23 (MAQTQADTAARKPVGQSVSATRR) are disordered.

It belongs to the universal ribosomal protein uL18 family. Part of the 50S ribosomal subunit; part of the 5S rRNA/L5/L18/L25 subcomplex. Contacts the 5S and 23S rRNAs.

Its function is as follows. This is one of the proteins that bind and probably mediate the attachment of the 5S RNA into the large ribosomal subunit, where it forms part of the central protuberance. The sequence is that of Large ribosomal subunit protein uL18 from Mycobacterium marinum (strain ATCC BAA-535 / M).